The following is a 477-amino-acid chain: Protein translocase subunit SecY (477 aa).

The next 10 membrane-spanning stretches (helical) occupy residues 28–48 (FMISFLITVVLLVLFRVLAII), 67–89 (FFSLFNLLGGGGLNQLSLFAVGI), 130–150 (IITLPFALVQSFAVIQIATNS), 165–185 (DFVAFYIIAMTAGTYLSVFLG), 196–216 (GITLLILSGILAQLPEGFIAA), 234–254 (AISFFIYFMAFVTLLFATTFI), 286–306 (SAGVIPVIFASSIMSIPVTIA), 329–349 (GIVLYGILVILFSFFYSYIQI), 387–407 (FIGAPFLTVIAIIPYIVSALI), and 413–433 (LSLGGTGIIIIVTAVVEFMSA).

This sequence belongs to the SecY/SEC61-alpha family. As to quaternary structure, component of the Sec protein translocase complex. Heterotrimer consisting of SecY, SecE and SecG subunits. The heterotrimers can form oligomers, although 1 heterotrimer is thought to be able to translocate proteins. Interacts with the ribosome. Interacts with SecDF, and other proteins may be involved. Interacts with SecA.

It is found in the cell membrane. In terms of biological role, the central subunit of the protein translocation channel SecYEG. Consists of two halves formed by TMs 1-5 and 6-10. These two domains form a lateral gate at the front which open onto the bilayer between TMs 2 and 7, and are clamped together by SecE at the back. The channel is closed by both a pore ring composed of hydrophobic SecY resides and a short helix (helix 2A) on the extracellular side of the membrane which forms a plug. The plug probably moves laterally to allow the channel to open. The ring and the pore may move independently. The protein is Protein translocase subunit SecY of Mycoplasma pneumoniae (strain ATCC 29342 / M129 / Subtype 1) (Mycoplasmoides pneumoniae).